The following is a 1645-amino-acid chain: Histone-lysine N-methyltransferase set-26 (1645 aa).

Disordered stretches follow at residues 1 to 82, 109 to 132, 200 to 228, 417 to 606, and 651 to 789; these read MADG…QQIP, EPAAAADSRPLTEEEQLAAERPTE, DAVGPGSPGTQYRRNQQTGGGLPSTSVAP, TPEQ…VLRP, and TGQS…DEAA. 2 stretches are compositionally biased toward low complexity: residues 16-31 and 67-82; these read EQPPLQQQQPEIAEPI and QEFYQEPQIPEPQQIP. Positions 207–228 are enriched in polar residues; it reads PGTQYRRNQQTGGGLPSTSVAP. Low complexity-rich tracts occupy residues 429–443 and 453–467; these read RQRAAPQFPAAAAQR and RPGASSSRAPRPSMA. Over residues 559–578 the composition is skewed to basic and acidic residues; that stretch reads MTQEEKNAHFARLTTDKEKP. Pro residues predominate over residues 592–603; sequence PHVPPPPPPPLV. Polar residues predominate over residues 651-675; that stretch reads TGQSGSSAAARQRTVSGSAARAQTY. Composition is skewed to basic residues over residues 684–699 and 731–741; these read QHHHQMPMDQRKRHSS and HRPRGRPKGTR. Acidic residues predominate over residues 780 to 789; it reads SESEGIDEAA. A PHD-type zinc finger spans residues 794–842; the sequence is TMRCHCGMDHGDGDTIECEGCKTWQHMACMGLTLKSNTSKYKCEMCLPR. The interval 865 to 904 is disordered; sequence AAKKQKRKSEPVEQKQKSQPSTSRKSAPMALQQQPAEPRV. Positions 881–899 are enriched in polar residues; the sequence is KSQPSTSRKSAPMALQQQP. One can recognise an SET domain in the interval 973 to 1064; the sequence is MSNEVKRQPG…RNTEVTLPFD (92 aa). Residues 1099 to 1172 show a composition bias toward basic and acidic residues; sequence RHRAMDHKKR…EAKERKKMEV (74 aa). 3 disordered regions span residues 1099–1333, 1371–1536, and 1548–1645; these read RHRA…SKNV, SGLL…STEG, and PLDD…TRWN. A coiled-coil region spans residues 1103-1217; it reads MDHKKREAEE…GKRKEARRRS (115 aa). Residues 1173–1183 show a composition bias toward low complexity; it reads EASAAAAPESS. A compositionally biased stretch (basic and acidic residues) spans 1188–1210; sequence AREERRIQQAEEMFRRQEEEGKR. 2 stretches are compositionally biased toward polar residues: residues 1258–1268 and 1300–1311; these read TTQPSTSSFAT and TVATPKDTTASN. Composition is skewed to basic and acidic residues over residues 1382-1427, 1434-1450, and 1468-1485; these read SEVR…KKAN, KSEKAVEKAVEKVEKKP, and KKTEEVDGIEREASESSS. Residues 1554 to 1565 show a composition bias toward polar residues; sequence SSSNTAPTTTIA.

The protein belongs to the class V-like SAM-binding methyltransferase superfamily. Expressed both in the germline and in somatic tissues.

Its subcellular location is the nucleus. The catalysed reaction is L-lysyl(9)-[histone H3] + 3 S-adenosyl-L-methionine = N(6),N(6),N(6)-trimethyl-L-lysyl(9)-[histone H3] + 3 S-adenosyl-L-homocysteine + 3 H(+). Its function is as follows. Histone methyltransferase that mediates trimethylation of 'Lys-9' of histone H3 in vitro. Involved in transcriptional regulation. Plays a role in the negative regulation of lifespan and in heat resistance. Together with set-9, negatively regulates lifespan in a germline-independent, partially daf-16-dependent fashion. Together with set-9, plays a role in germline development and maintenance and might play a role in the restriction of the trimethylation mark on histone H3 'Lys-4'(H3K4me3) to target genes specifically in the germline. Together with spr-5, required for transgenerational fertility. The polypeptide is Histone-lysine N-methyltransferase set-26 (Caenorhabditis elegans).